Reading from the N-terminus, the 199-residue chain is Early activation antigen CD69 (199 aa).

The segment at M1–F29 is disordered. Over M1–P40 the chain is Cytoplasmic. A helical; Signal-anchor for type II membrane protein membrane pass occupies residues V41–L61. Over S62–K199 the chain is Extracellular. Disulfide bonds link C85-C96, C113-C194, and C173-C186. Positions Y92 to N195 constitute a C-type lectin domain. N166 is a glycosylation site (N-linked (GlcNAc...) asparagine).

Homodimer; disulfide-linked. Interacts with S100A8 and S100A9. Interacts with galactin-1/LGALS1. Interacts with S1PR1; this interaction mediates S1PR1 degradation. Post-translationally, constitutive Ser/Thr phosphorylation in both mature thymocytes and activated T-lymphocytes. As to expression, expressed on the surface of activated T-cells, B-cells, natural killer cells, neutrophils, eosinophils, epidermal Langerhans cells and platelets.

It is found in the cell membrane. Functionally, transmembrane protein expressed mainly on T-cells resident in mucosa that plays an essential role in immune cell homeostasis. Rapidly expressed on the surface of platelets, T-lymphocytes and NK cells upon activation by various stimuli, such as antigen recognition or cytokine signaling, stimulates different signaling pathways in different cell types. Negatively regulates Th17 cell differentiation through its carbohydrate dependent interaction with galectin-1/LGALS1 present on immature dendritic cells. Association of CD69 cytoplasmic tail with the JAK3/STAT5 signaling pathway regulates the transcription of RORgamma/RORC and, consequently, differentiation toward the Th17 lineage. Also acts via the S100A8/S100A9 complex present on peripheral blood mononuclear cells to promote the conversion of naive CD4 T-cells into regulatory T-cells. Acts as an oxidized low-density lipoprotein (oxLDL) receptor in CD4 T-lymphocytes and negatively regulates the inflammatory response by inducing the expression of PDCD1 through the activation of NFAT. Participates in adipose tissue-derived mesenchymal stem cells (ASCs)-mediated protection against P.aeruginosa infection. Mechanistically, specifically recognizes P.aeruginosa to promote ERK1 activation, followed by granulocyte-macrophage colony-stimulating factor (GM-CSF) and other inflammatory cytokines secretion. In eosinophils, induces IL-10 production through the ERK1/2 pathway. Negatively regulates the chemotactic responses of effector lymphocytes and dendritic cells (DCs) to sphingosine 1 phosphate/S1P by acting as a S1PR1 receptor agonist and facilitating the internalization and degradation of the receptor. The protein is Early activation antigen CD69 (CD69) of Homo sapiens (Human).